The sequence spans 119 residues: Large ribosomal subunit protein uL22 (119 aa).

Belongs to the universal ribosomal protein uL22 family. Part of the 50S ribosomal subunit.

In terms of biological role, this protein binds specifically to 23S rRNA; its binding is stimulated by other ribosomal proteins, e.g. L4, L17, and L20. It is important during the early stages of 50S assembly. It makes multiple contacts with different domains of the 23S rRNA in the assembled 50S subunit and ribosome. The globular domain of the protein is located near the polypeptide exit tunnel on the outside of the subunit, while an extended beta-hairpin is found that lines the wall of the exit tunnel in the center of the 70S ribosome. This is Large ribosomal subunit protein uL22 from Rickettsia bellii (strain OSU 85-389).